The primary structure comprises 442 residues: Methionine aminopeptidase 2-1 (442 aa).

Positions 1 to 92 (MAAQASEELE…ISELFPNNQY (92 aa)) are disordered. A compositionally biased stretch (polar residues) spans 15-25 (NGQNGHAQEQV). Positions 30–47 (EAADNDDSEDDEKEEEGG) are enriched in acidic residues. Basic residues predominate over residues 56 to 72 (AKKKKKRKPKKKKKGGA). Histidine 195 is a binding site for substrate. Aspartate 215, aspartate 226, and histidine 295 together coordinate a divalent metal cation. Histidine 303 contacts substrate. Glutamate 328 and glutamate 423 together coordinate a divalent metal cation.

Belongs to the peptidase M24A family. Methionine aminopeptidase eukaryotic type 2 subfamily. The cofactor is Co(2+). Zn(2+) serves as cofactor. It depends on Mn(2+) as a cofactor. Requires Fe(2+) as cofactor.

Its subcellular location is the cytoplasm. The enzyme catalyses Release of N-terminal amino acids, preferentially methionine, from peptides and arylamides.. Its function is as follows. Cotranslationally removes the N-terminal methionine from nascent proteins. The N-terminal methionine is often cleaved when the second residue in the primary sequence is small and uncharged (Met-Ala-, Cys, Gly, Pro, Ser, Thr, or Val). The protein is Methionine aminopeptidase 2-1 of Talaromyces marneffei (strain ATCC 18224 / CBS 334.59 / QM 7333) (Penicillium marneffei).